The primary structure comprises 351 residues: Mannonate dehydratase (351 aa).

Belongs to the mannonate dehydratase family. It depends on Fe(2+) as a cofactor. Mn(2+) is required as a cofactor.

It carries out the reaction D-mannonate = 2-dehydro-3-deoxy-D-gluconate + H2O. Its pathway is carbohydrate metabolism; pentose and glucuronate interconversion. Functionally, catalyzes the dehydration of D-mannonate. The polypeptide is Mannonate dehydratase (Clostridium acetobutylicum (strain ATCC 824 / DSM 792 / JCM 1419 / IAM 19013 / LMG 5710 / NBRC 13948 / NRRL B-527 / VKM B-1787 / 2291 / W)).